A 284-amino-acid polypeptide reads, in one-letter code: Trimeric intracellular cation channel type B-B (284 aa).

Over 1–15 (MESLSEVSVQFSQLS) the chain is Lumenal. The helical transmembrane segment at 16 to 32 (MFPFFDMAHYLASVMSA) threads the bilayer. Residues 33-44 (REQAGALDIASH) lie on the Cytoplasmic side of the membrane. A helical membrane pass occupies residues 45–68 (SPMASWFSAMLHCFGGGILSSILL). Residues 69-79 (AEPPVGILANT) lie on the Lumenal side of the membrane. The helical transmembrane segment at 80-99 (TNIMLASAIWYMVYYFPYDL) threads the bilayer. At 100–102 (FYN) the chain is on the cytoplasmic side. A helical transmembrane segment spans residues 103 to 121 (CFFFLPIRLIAAGMKEVTR). A 1,2-diacyl-sn-glycero-3-phospho-(1D-myo-inositol-4,5-bisphosphate)-binding residues include K117 and R121. Residues 122–139 (TWKILSGITHAHSHYKDA) are Lumenal-facing. Residues 140-157 (WLVMITIGWARGAGGGLI) form a helical membrane-spanning segment. Residues 158 to 178 (SNFEQLVRGVWKPESNEFLKM) are Cytoplasmic-facing. The chain crosses the membrane as a helical span at residues 179-196 (SYPVKVTLIGAVLFTLQH). Over 197-204 (GHYLPISR) the chain is Lumenal. Residues 205-225 (HNLMFIYTMFLVSIKVTMMLT) form a helical membrane-spanning segment. Over 226–284 (HSAGSPFLPLETPLHRILFGLRQNQAEVRESPSSSGAKGKPSKKTLDKDSGEQSNKKDK) the chain is Cytoplasmic. Positions 250 to 284 (QAEVRESPSSSGAKGKPSKKTLDKDSGEQSNKKDK) are disordered. Basic and acidic residues predominate over residues 269–284 (KTLDKDSGEQSNKKDK).

The protein belongs to the TMEM38 family. As to quaternary structure, homotrimer; conformation seems to be controled by binding to diacylglycerol (DAG).

Its subcellular location is the endoplasmic reticulum membrane. It carries out the reaction K(+)(in) = K(+)(out). Channel activity is activated by increased cytosolic Ca(2+) levels and blocked by luminal high Ca(2+) levels. In terms of biological role, intracellular monovalent cation channel required for maintenance of rapid intracellular calcium release. Acts as a potassium counter-ion channel that functions in synchronization with calcium release from intracellular stores. Activated by increased cytosolic Ca(2+) levels. The sequence is that of Trimeric intracellular cation channel type B-B (tmem38b-b) from Xenopus laevis (African clawed frog).